The chain runs to 348 residues: Beta-hexosaminidase (348 aa).

Substrate contacts are provided by residues D64, R72, R138, and 168-169 (KH). H181 acts as the Proton donor/acceptor in catalysis. The Nucleophile role is filled by D252.

It belongs to the glycosyl hydrolase 3 family. NagZ subfamily.

It is found in the cytoplasm. The catalysed reaction is Hydrolysis of terminal non-reducing N-acetyl-D-hexosamine residues in N-acetyl-beta-D-hexosaminides.. The protein operates within cell wall biogenesis; peptidoglycan recycling. Its function is as follows. Plays a role in peptidoglycan recycling by cleaving the terminal beta-1,4-linked N-acetylglucosamine (GlcNAc) from peptide-linked peptidoglycan fragments, giving rise to free GlcNAc, anhydro-N-acetylmuramic acid and anhydro-N-acetylmuramic acid-linked peptides. The protein is Beta-hexosaminidase of Alkalilimnicola ehrlichii (strain ATCC BAA-1101 / DSM 17681 / MLHE-1).